The primary structure comprises 808 residues: Protein SQS1 (808 aa).

Composition is skewed to basic residues over residues 1 to 20 (MAKR…KRGG) and 28 to 37 (RGSKRGRGGR). 3 disordered regions span residues 1 to 67 (MAKR…GDLS), 151 to 180 (RSKN…DMEI), and 485 to 529 (ETPP…EELG). 2 stretches are compositionally biased toward basic and acidic residues: residues 39-48 (RGFEETERSA) and 153-179 (KNQE…KDME). The region spanning 621–683 (GFHVQNIRDE…HTHIMVEKVK (63 aa)) is the R3H domain. The G-patch domain maps to 748 to 795 (QDNIGRRMLEKLGWSSGEGLGAHGNKGISIPVMARVKKSKSGLRHSKE). The tract at residues 764–808 (GEGLGAHGNKGISIPVMARVKKSKSGLRHSKEDEDTGRSSSFRKK) is disordered. Positions 782–791 (RVKKSKSGLR) are enriched in basic residues.

The protein belongs to the SQS1 family.

It localises to the cytoplasm. It is found in the nucleus. Functionally, may be involved in splicing. This is Protein SQS1 (SQS1) from Candida glabrata (strain ATCC 2001 / BCRC 20586 / JCM 3761 / NBRC 0622 / NRRL Y-65 / CBS 138) (Yeast).